The following is a 245-amino-acid chain: Galectin-3 (245 aa).

A disordered region spans residues 1 to 30 (MADGFSLNDALAGSGNPNPQGWPGAWGNQP). Alanine 2 is subject to N-acetylalanine. Phosphoserine; by CK1 is present on serine 6. 4 tandem repeats follow at residues 35-43 (YPGASYPGA), 44-52 (YPGQAPPGA), 53-61 (YPGQAPPGA), and 62-70 (YPGPTAPGA). The interval 35 to 99 (YPGASYPGAY…PSAPGAYPAA (65 aa)) is 7 X 9 AA tandem repeats of Y-P-G-X(3)-P-[GS]-A. Positions 47 to 68 (QAPPGAYPGQAPPGAYPGPTAP) are disordered. One copy of the 5; approximate repeat lies at 71–78 (YPGPAPGA). Residues 79 to 88 (YPGQPGASGA) form a 6; approximate repeat. A 7; approximate repeat occupies 89-99 (YPSAPGAYPAA). Positions 113–243 (YKLPLAGGVM…DITLTSAAPT (131 aa)) constitute a Galectin domain. 176-182 (WGREERQ) is a binding site for a beta-D-galactoside. Serine 183 carries the phosphoserine modification. The short motif at 221–236 (KNLREINQMEISGDIT) is the Nuclear export signal element.

As to quaternary structure, probably forms homo- or heterodimers. Interacts with DMBT1. Interacts with CD6 and ALCAM. Forms a complex with the ITGA3, ITGB1 and CSPG4. Interacts with LGALS3BP, LYPD3, ZFTRAF1 and UACA. Interacts with TRIM16; this interaction mediates autophagy of damage endomembranes. Interacts with cargo receptor TMED10; the interaction mediates the translocation from the cytoplasm into the ERGIC (endoplasmic reticulum-Golgi intermediate compartment) and thereby secretion. Interacts with and inhibits by binding NCR3/NKp30.

The protein localises to the cytoplasm. It localises to the nucleus. The protein resides in the secreted. Its function is as follows. Galactose-specific lectin which binds IgE. May mediate with the alpha-3, beta-1 integrin the stimulation by CSPG4 of endothelial cells migration. Together with DMBT1, required for terminal differentiation of columnar epithelial cells during early embryogenesis. In the nucleus: acts as a pre-mRNA splicing factor. Involved in acute inflammatory responses including neutrophil activation and adhesion, chemoattraction of monocytes macrophages, opsonization of apoptotic neutrophils, and activation of mast cells. Together with TRIM16, coordinates the recognition of membrane damage with mobilization of the core autophagy regulators ATG16L1 and BECN1 in response to damaged endomembranes. When secreted, interacts with NK cell-activating receptor NCR3/NKp30 acting as an inhibitory ligand which antagonizes NK cell attack. This is Galectin-3 (LGALS3) from Cricetulus longicaudatus (Long-tailed dwarf hamster).